A 335-amino-acid chain; its full sequence is Methionine import ATP-binding protein MetN 1 (335 aa).

The ABC transporter domain maps to 2–242 (IEFQNVHKTY…PKHPTTRRFV (241 aa)). 38-45 (GHSGAGKS) is an ATP binding site.

This sequence belongs to the ABC transporter superfamily. Methionine importer (TC 3.A.1.24) family. In terms of assembly, the complex is composed of two ATP-binding proteins (MetN), two transmembrane proteins (MetI) and a solute-binding protein (MetQ).

The protein resides in the cell inner membrane. It catalyses the reaction L-methionine(out) + ATP + H2O = L-methionine(in) + ADP + phosphate + H(+). It carries out the reaction D-methionine(out) + ATP + H2O = D-methionine(in) + ADP + phosphate + H(+). Functionally, part of the ABC transporter complex MetNIQ involved in methionine import. Responsible for energy coupling to the transport system. The protein is Methionine import ATP-binding protein MetN 1 of Pseudomonas fluorescens (strain ATCC BAA-477 / NRRL B-23932 / Pf-5).